A 404-amino-acid polypeptide reads, in one-letter code: Cysteine desulfurase IscS (404 aa).

Pyridoxal 5'-phosphate is bound by residues 75 to 76 (AT), Asn155, Gln183, and 203 to 205 (SAH). Lys206 carries the post-translational modification N6-(pyridoxal phosphate)lysine. Thr243 contributes to the pyridoxal 5'-phosphate binding site. Cys328 serves as the catalytic Cysteine persulfide intermediate. A [2Fe-2S] cluster-binding site is contributed by Cys328.

This sequence belongs to the class-V pyridoxal-phosphate-dependent aminotransferase family. NifS/IscS subfamily. In terms of assembly, homodimer. Forms a heterotetramer with IscU, interacts with other sulfur acceptors. Pyridoxal 5'-phosphate is required as a cofactor.

It is found in the cytoplasm. The enzyme catalyses (sulfur carrier)-H + L-cysteine = (sulfur carrier)-SH + L-alanine. The protein operates within cofactor biosynthesis; iron-sulfur cluster biosynthesis. Master enzyme that delivers sulfur to a number of partners involved in Fe-S cluster assembly, tRNA modification or cofactor biosynthesis. Catalyzes the removal of elemental sulfur atoms from cysteine to produce alanine. Functions as a sulfur delivery protein for Fe-S cluster synthesis onto IscU, an Fe-S scaffold assembly protein, as well as other S acceptor proteins. The protein is Cysteine desulfurase IscS of Shewanella piezotolerans (strain WP3 / JCM 13877).